The sequence spans 265 residues: MNFIVEALNEVRKRKPLVHNITNFVVMNTTANALLALGASPVMAHAEEELEEMIGLADAVVINIGTLDSWWRKSMIKAVEIANEMKKPIVLDPVGAGATKLRTKVALEILDRGVTVLKGNFGEISSLLGEFGKTRGVDSSEYDEEKAKVLALSAAKEFNTTVAVTGAVDYVSDGGKVFAIYNGHKLLERVTGTGCIVTAITGAFVAVTEPLRAAISSLVVFGIAAEKAYEEAKYPGSFHVKLYDWLYRIDGEVIRKYAKVREVGV.

Residue methionine 43 coordinates substrate. Residues lysine 118 and threonine 165 each coordinate ATP. Residue glycine 192 participates in substrate binding.

Belongs to the Thz kinase family. Mg(2+) serves as cofactor.

It catalyses the reaction 5-(2-hydroxyethyl)-4-methylthiazole + ATP = 4-methyl-5-(2-phosphooxyethyl)-thiazole + ADP + H(+). The protein operates within cofactor biosynthesis; thiamine diphosphate biosynthesis; 4-methyl-5-(2-phosphoethyl)-thiazole from 5-(2-hydroxyethyl)-4-methylthiazole: step 1/1. Catalyzes the phosphorylation of the hydroxyl group of 4-methyl-5-beta-hydroxyethylthiazole (THZ). This is Hydroxyethylthiazole kinase from Pyrococcus abyssi (strain GE5 / Orsay).